The following is a 198-amino-acid chain: Recombination protein RecR (198 aa).

The segment at 58–73 (CSVCGNYTDTDPCAIC) adopts a C4-type zinc-finger fold. Residues 81-175 (SLVCVVEEPK…KVTRIAHGIP (95 aa)) form the Toprim domain.

It belongs to the RecR family.

Its function is as follows. May play a role in DNA repair. It seems to be involved in an RecBC-independent recombinational process of DNA repair. It may act with RecF and RecO. The protein is Recombination protein RecR of Clostridium acetobutylicum (strain ATCC 824 / DSM 792 / JCM 1419 / IAM 19013 / LMG 5710 / NBRC 13948 / NRRL B-527 / VKM B-1787 / 2291 / W).